Consider the following 1462-residue polypeptide: Gag-Pol polyprotein (1462 aa).

A lipid anchor (N-myristoyl glycine; by host) is attached at Gly2. Residues Val7–Leu31 are interaction with Gp41. Residues Leu16–Arg22 carry the Nuclear export signal motif. Residues Lys26–Lys32 carry the Nuclear localization signal motif. Residues Asn191 to Gln228 are interaction with human PPIA/CYPA and NUP153. Residues Tyr279 to Met365 are dimerization/Multimerization of capsid protein p24. 2 CCHC-type zinc fingers span residues Ile389–Ala406 and Gln410–Glu427. The interval Leu433 to Leu509 is disordered. The segment covering Pro448–Gly465 has biased composition (polar residues). Composition is skewed to basic and acidic residues over residues Ala472–Gly482 and Ala497–Arg507. Residues Pro512–Leu516 are dimerization of protease. One can recognise a Peptidase A2 domain in the interval Glu532–Leu601. Catalysis depends on Asp536, which acts as the For protease activity; shared with dimeric partner. Dimerization of protease regions lie at residues Gly560 to Asn566 and Asn599 to Pro611. The Reverse transcriptase domain occupies Gly655–Trp845. Residues Asp720, Asp795, and Asp796 each contribute to the Mg(2+) site. Residues Phe837 to Trp845 are RT 'primer grip'. A Tryptophan repeat motif motif is present at residues Trp1007–Trp1023. The 124-residue stretch at Ile1043–Arg1166 folds into the RNase H type-1 domain. Residues Asp1052, Glu1087, Asp1107, and Asp1158 each contribute to the Mg(2+) site. The Integrase-type zinc finger occupies Glu1172–Gln1213. Positions 1181, 1185, 1209, and 1212 each coordinate Zn(2+). Residues Val1223–Thr1374 form the Integrase catalytic domain. Mg(2+)-binding residues include Asp1233, Asp1285, and Glu1321. The segment at residues Phe1392 to Asp1439 is a DNA-binding region (integrase-type).

Homotrimer; further assembles as hexamers of trimers. Interacts with gp41 (via C-terminus). Interacts with host CALM1; this interaction induces a conformational change in the Matrix protein, triggering exposure of the myristate group. Interacts with host AP3D1; this interaction allows the polyprotein trafficking to multivesicular bodies during virus assembly. Part of the pre-integration complex (PIC) which is composed of viral genome, matrix protein, Vpr and integrase. As to quaternary structure, homodimer; the homodimer further multimerizes as homohexamers or homopentamers. Interacts with human PPIA/CYPA. Interacts with human NUP153. Interacts with host PDZD8; this interaction stabilizes the capsid. Interacts with monkey TRIM5; this interaction destabilizes the capsid. In terms of assembly, homodimer, whose active site consists of two apposed aspartic acid residues. Heterodimer of p66 RT and p51 RT (RT p66/p51). Heterodimerization of RT is essential for DNA polymerase activity. The overall folding of the subdomains is similar in p66 RT and p51 RT but the spatial arrangements of the subdomains are dramatically different. As to quaternary structure, homotetramer; may further associate as a homohexadecamer. Part of the pre-integration complex (PIC) which is composed of viral genome, matrix protein, Vpr and integrase. Interacts with human SMARCB1/INI1 and human PSIP1/LEDGF isoform 1. Interacts with human KPNA3; this interaction might play a role in nuclear import of the pre-integration complex. Interacts with human NUP153; this interaction might play a role in nuclear import of the pre-integration complex. It depends on Mg(2+) as a cofactor. Specific enzymatic cleavages by the viral protease yield mature proteins. The protease is released by autocatalytic cleavage. The polyprotein is cleaved during and after budding, this process is termed maturation. Proteolytic cleavage of p66 RT removes the RNase H domain to yield the p51 RT subunit. Nucleocapsid protein p7 might be further cleaved after virus entry.

The protein localises to the host cell membrane. It is found in the host endosome. Its subcellular location is the host multivesicular body. It localises to the virion membrane. The protein resides in the host nucleus. The protein localises to the host cytoplasm. It is found in the virion. The enzyme catalyses Endopeptidase for which the P1 residue is preferably hydrophobic.. The catalysed reaction is Endohydrolysis of RNA in RNA/DNA hybrids. Three different cleavage modes: 1. sequence-specific internal cleavage of RNA. Human immunodeficiency virus type 1 and Moloney murine leukemia virus enzymes prefer to cleave the RNA strand one nucleotide away from the RNA-DNA junction. 2. RNA 5'-end directed cleavage 13-19 nucleotides from the RNA end. 3. DNA 3'-end directed cleavage 15-20 nucleotides away from the primer terminus.. It catalyses the reaction 3'-end directed exonucleolytic cleavage of viral RNA-DNA hybrid.. It carries out the reaction DNA(n) + a 2'-deoxyribonucleoside 5'-triphosphate = DNA(n+1) + diphosphate. Protease: The viral protease is inhibited by many synthetic protease inhibitors (PIs), such as amprenavir, atazanavir, indinavir, loprinavir, nelfinavir, ritonavir and saquinavir. Use of protease inhibitors in tritherapy regimens permit more ambitious therapeutic strategies. Reverse transcriptase/ribonuclease H: RT can be inhibited either by nucleoside RT inhibitors (NRTIs) or by non nucleoside RT inhibitors (NNRTIs). NRTIs act as chain terminators, whereas NNRTIs inhibit DNA polymerization by binding a small hydrophobic pocket near the RT active site and inducing an allosteric change in this region. Classical NRTIs are abacavir, adefovir (PMEA), didanosine (ddI), lamivudine (3TC), stavudine (d4T), tenofovir (PMPA), zalcitabine (ddC), and zidovudine (AZT). Classical NNRTIs are atevirdine (BHAP U-87201E), delavirdine, efavirenz (DMP-266), emivirine (I-EBU), and nevirapine (BI-RG-587). The tritherapies used as a basic effective treatment of AIDS associate two NRTIs and one NNRTI. Functionally, mediates, with Gag polyprotein, the essential events in virion assembly, including binding the plasma membrane, making the protein-protein interactions necessary to create spherical particles, recruiting the viral Env proteins, and packaging the genomic RNA via direct interactions with the RNA packaging sequence (Psi). Gag-Pol polyprotein may regulate its own translation, by the binding genomic RNA in the 5'-UTR. At low concentration, the polyprotein would promote translation, whereas at high concentration, the polyprotein would encapsidate genomic RNA and then shut off translation. Targets the polyprotein to the plasma membrane via a multipartite membrane-binding signal, that includes its myristoylated N-terminus. Matrix protein is part of the pre-integration complex. Implicated in the release from host cell mediated by Vpu. Binds to RNA. In terms of biological role, forms the conical core that encapsulates the genomic RNA-nucleocapsid complex in the virion. Most core are conical, with only 7% tubular. The core is constituted by capsid protein hexamer subunits. The core is disassembled soon after virion entry. Host restriction factors such as TRIM5-alpha or TRIMCyp bind retroviral capsids and cause premature capsid disassembly, leading to blocks in reverse transcription. Capsid restriction by TRIM5 is one of the factors which restricts HIV-1 to the human species. Host PIN1 apparently facilitates the virion uncoating. On the other hand, interactions with PDZD8 or CYPA stabilize the capsid. Its function is as follows. Encapsulates and protects viral dimeric unspliced genomic RNA (gRNA). Binds these RNAs through its zinc fingers. Acts as a nucleic acid chaperone which is involved in rearangement of nucleic acid secondary structure during gRNA retrotranscription. Also facilitates template switch leading to recombination. As part of the polyprotein, participates in gRNA dimerization, packaging, tRNA incorporation and virion assembly. Functionally, aspartyl protease that mediates proteolytic cleavages of Gag and Gag-Pol polyproteins during or shortly after the release of the virion from the plasma membrane. Cleavages take place as an ordered, step-wise cascade to yield mature proteins. This process is called maturation. Displays maximal activity during the budding process just prior to particle release from the cell. Also cleaves Nef and Vif, probably concomitantly with viral structural proteins on maturation of virus particles. Hydrolyzes host EIF4GI and PABP1 in order to shut off the capped cellular mRNA translation. The resulting inhibition of cellular protein synthesis serves to ensure maximal viral gene expression and to evade host immune response. Multifunctional enzyme that converts the viral RNA genome into dsDNA in the cytoplasm, shortly after virus entry into the cell. This enzyme displays a DNA polymerase activity that can copy either DNA or RNA templates, and a ribonuclease H (RNase H) activity that cleaves the RNA strand of RNA-DNA heteroduplexes in a partially processive 3' to 5' endonucleasic mode. Conversion of viral genomic RNA into dsDNA requires many steps. A tRNA(3)-Lys binds to the primer-binding site (PBS) situated at the 5'-end of the viral RNA. RT uses the 3' end of the tRNA primer to perform a short round of RNA-dependent minus-strand DNA synthesis. The reading proceeds through the U5 region and ends after the repeated (R) region which is present at both ends of viral RNA. The portion of the RNA-DNA heteroduplex is digested by the RNase H, resulting in a ssDNA product attached to the tRNA primer. This ssDNA/tRNA hybridizes with the identical R region situated at the 3' end of viral RNA. This template exchange, known as minus-strand DNA strong stop transfer, can be either intra- or intermolecular. RT uses the 3' end of this newly synthesized short ssDNA to perform the RNA-dependent minus-strand DNA synthesis of the whole template. RNase H digests the RNA template except for two polypurine tracts (PPTs) situated at the 5'-end and near the center of the genome. It is not clear if both polymerase and RNase H activities are simultaneous. RNase H probably can proceed both in a polymerase-dependent (RNA cut into small fragments by the same RT performing DNA synthesis) and a polymerase-independent mode (cleavage of remaining RNA fragments by free RTs). Secondly, RT performs DNA-directed plus-strand DNA synthesis using the PPTs that have not been removed by RNase H as primers. PPTs and tRNA primers are then removed by RNase H. The 3' and 5' ssDNA PBS regions hybridize to form a circular dsDNA intermediate. Strand displacement synthesis by RT to the PBS and PPT ends produces a blunt ended, linear dsDNA copy of the viral genome that includes long terminal repeats (LTRs) at both ends. In terms of biological role, catalyzes viral DNA integration into the host chromosome, by performing a series of DNA cutting and joining reactions. This enzyme activity takes place after virion entry into a cell and reverse transcription of the RNA genome in dsDNA. The first step in the integration process is 3' processing. This step requires a complex comprising the viral genome, matrix protein, Vpr and integrase. This complex is called the pre-integration complex (PIC). The integrase protein removes 2 nucleotides from each 3' end of the viral DNA, leaving recessed CA OH's at the 3' ends. In the second step, the PIC enters cell nucleus. This process is mediated through integrase and Vpr proteins, and allows the virus to infect a non dividing cell. This ability to enter the nucleus is specific of lentiviruses, other retroviruses cannot and rely on cell division to access cell chromosomes. In the third step, termed strand transfer, the integrase protein joins the previously processed 3' ends to the 5' ends of strands of target cellular DNA at the site of integration. The 5'-ends are produced by integrase-catalyzed staggered cuts, 5 bp apart. A Y-shaped, gapped, recombination intermediate results, with the 5'-ends of the viral DNA strands and the 3' ends of target DNA strands remaining unjoined, flanking a gap of 5 bp. The last step is viral DNA integration into host chromosome. This involves host DNA repair synthesis in which the 5 bp gaps between the unjoined strands are filled in and then ligated. Since this process occurs at both cuts flanking the HIV genome, a 5 bp duplication of host DNA is produced at the ends of HIV-1 integration. Alternatively, Integrase may catalyze the excision of viral DNA just after strand transfer, this is termed disintegration. In Human immunodeficiency virus type 2 subtype A (isolate D194) (HIV-2), this protein is Gag-Pol polyprotein (gag-pol).